The following is a 316-amino-acid chain: MRFWALTVLSLLLSLLLGVSSDTAQCGSQAGNATCPNDLCCSSGGYCGLTVAYCCAGCVSQCRNCFFTESMFEQMLPNRNNDSCPGKGFYTYDAYFVATEFYPGFGMTGDDDTRKRELAAFFAQTSQETSGRSIIGEDAPFTWGYCLVNELNPNSDYCDPKTKSSYPCVADYYGRGPLQLRWNYNYGECGNYLGQNLLDEPEKVATDPVLSFEAALWFWMNPHSTGAPSCHEVITGEWSPSEADIEAGRKPGFGMLTNIITNGGECTKDGKTRQQNRIDYYLRYCDMLQVDPGDNLYCDNQETFEDNGLLKMVGTM.

An N-terminal signal peptide occupies residues 1-23 (MRFWALTVLSLLLSLLLGVSSDT). Residues 24 to 64 (AQCGSQAGNATCPNDLCCSSGGYCGLTVAYCCAGCVSQCRN) form the Chitin-binding type-1 domain. 7 cysteine pairs are disulfide-bonded: Cys26–Cys41, Cys35–Cys47, Cys40–Cys54, Cys58–Cys62, Cys84–Cys146, Cys158–Cys168, and Cys266–Cys298. Catalysis depends on Glu128, which acts as the Proton donor.

This sequence belongs to the glycosyl hydrolase 19 family. Chitinase class I subfamily.

The catalysed reaction is Random endo-hydrolysis of N-acetyl-beta-D-glucosaminide (1-&gt;4)-beta-linkages in chitin and chitodextrins.. In terms of biological role, defense against chitin-containing fungal pathogens. In Populus trichocarpa (Western balsam poplar), this protein is Endochitinase WIN8 (WIN8).